A 146-amino-acid chain; its full sequence is Deoxyuridine 5'-triphosphate nucleotidohydrolase (146 aa).

Substrate-binding positions include 65 to 67, asparagine 78, 82 to 84, and methionine 92; these read RSG and LID.

The protein belongs to the dUTPase family. It depends on Mg(2+) as a cofactor.

It carries out the reaction dUTP + H2O = dUMP + diphosphate + H(+). It participates in pyrimidine metabolism; dUMP biosynthesis; dUMP from dCTP (dUTP route): step 2/2. This enzyme is involved in nucleotide metabolism: it produces dUMP, the immediate precursor of thymidine nucleotides and it decreases the intracellular concentration of dUTP so that uracil cannot be incorporated into DNA. The sequence is that of Deoxyuridine 5'-triphosphate nucleotidohydrolase from Thiobacillus denitrificans (strain ATCC 25259 / T1).